The primary structure comprises 180 residues: Large ribosomal subunit protein uL6 (180 aa).

It belongs to the universal ribosomal protein uL6 family. As to quaternary structure, part of the 50S ribosomal subunit.

In terms of biological role, this protein binds to the 23S rRNA, and is important in its secondary structure. It is located near the subunit interface in the base of the L7/L12 stalk, and near the tRNA binding site of the peptidyltransferase center. The polypeptide is Large ribosomal subunit protein uL6 (Dictyoglomus thermophilum (strain ATCC 35947 / DSM 3960 / H-6-12)).